Here is a 1347-residue protein sequence, read N- to C-terminus: Protocadherin-11 X-linked (1347 aa).

The first 23 residues, 1 to 23, serve as a signal peptide directing secretion; sequence MDLLSGTYIFAVLLACVVFHSGA. At 24–812 the chain is on the extracellular side; sequence QEKNYTIREE…VSSPTNDYVK (789 aa). Cadherin domains are found at residues 26–139, 140–249, 250–355, 362–466, 467–570, 571–673, and 677–795; these read KNYT…APLF, PATV…HPVF, KETE…VPSI, NPVN…APVF, TQSF…SPVF, THNE…KPVF, and PSNY…APVT. Residues Asn-27, Asn-48, and Asn-54 are each glycosylated (N-linked (GlcNAc...) asparagine). N-linked (GlcNAc...) asparagine glycosylation occurs at Asn-344. Asn-553 carries N-linked (GlcNAc...) asparagine glycosylation. A glycan (N-linked (GlcNAc...) asparagine) is linked at Asn-773. Residues 813–833 traverse the membrane as a helical segment; that stretch reads ILVAAVAGTITVVVVIFITAV. Topologically, residues 834-1347 are cytoplasmic; that stretch reads VRCRQAPHLK…DSPIMEEHPL (514 aa). Disordered regions lie at residues 1057–1091, 1097–1116, and 1326–1347; these read LPEG…GYPQ, RATP…ESTF, and FTPR…EHPL.

It localises to the cell membrane. Potential calcium-dependent cell-adhesion protein. This chain is Protocadherin-11 X-linked (PCDH11X), found in Gorilla gorilla gorilla (Western lowland gorilla).